The following is a 376-amino-acid chain: Zinc-regulated transporter 1 (376 aa).

Residues M1–R50 are Extracellular-facing. A helical transmembrane segment spans residues I51–S71. The Cytoplasmic portion of the chain corresponds to T72–P80. The helical transmembrane segment at L81 to I101 threads the bilayer. The Extracellular portion of the chain corresponds to H102–N122. A helical membrane pass occupies residues W123 to T143. Over D144 to Q216 the chain is Cytoplasmic. Polar residues predominate over residues V177–S191. The interval V177–N196 is disordered. Residues A217–G237 form a helical membrane-spanning segment. Over L238 to S242 the chain is Extracellular. Residues V243 to L263 traverse the membrane as a helical segment. Topologically, residues G264–K278 are cytoplasmic. The helical transmembrane segment at R279–I299 threads the bilayer. The Extracellular segment spans residues G300–G310. A helical membrane pass occupies residues S311 to Y331. Residues T332–E354 are Cytoplasmic-facing. The chain crosses the membrane as a helical span at residues L355–W375. Position 376 (A376) is a topological domain, extracellular.

This sequence belongs to the ZIP transporter (TC 2.A.5) family.

The protein resides in the membrane. In terms of biological role, high-affinity zinc transport protein. The polypeptide is Zinc-regulated transporter 1 (ZRT1) (Saccharomyces cerevisiae (strain ATCC 204508 / S288c) (Baker's yeast)).